The following is a 92-amino-acid chain: Transcription factor PRE1 (92 aa).

One can recognise a bHLH domain in the interval 4 to 59 (RRSRQSSSAPRISDNQMIDLVSKLRQILPEIGQRRRSDKASASKVLQETCNYIRNL).

Interacts with IBH1 and HFR1. Expressed in roots, leaves, stems and flowers.

The protein localises to the nucleus. Its function is as follows. Atypical and probable non DNA-binding bHLH transcription factor that integrates multiple signaling pathways to regulate cell elongation and plant development. Binds IBH1, forming a pair of antagonistic bHLH transcription factors that function downstream of BZR1 to mediate brassinosteroid regulation of cell elongation. Regulates light responses by binding and inhibiting the activity of the bHLH transcription factor HFR1, a critical regulator of light signaling and shade avoidance. May have a regulatory role in various aspects of gibberellin-dependent growth and development. The polypeptide is Transcription factor PRE1 (PRE1) (Arabidopsis thaliana (Mouse-ear cress)).